The primary structure comprises 617 residues: V-type proton ATPase catalytic subunit A (617 aa).

257–264 (GAFGCGKT) contributes to the ATP binding site.

This sequence belongs to the ATPase alpha/beta chains family. In terms of assembly, V-ATPase is a heteromultimeric enzyme composed of a peripheral catalytic V1 complex (components A to H) attached to an integral membrane V0 proton pore complex (components: a, c, c', c'', d, e, f and VOA1). In terms of processing, is a probable target for sumoylation.

Its subcellular location is the vacuole membrane. The enzyme catalyses ATP + H2O + 4 H(+)(in) = ADP + phosphate + 5 H(+)(out). In terms of biological role, catalytic subunit of the V1 complex of vacuolar(H+)-ATPase (V-ATPase), a multisubunit enzyme composed of a peripheral complex (V1) that hydrolyzes ATP and a membrane integral complex (V0) that translocates protons. V-ATPase is responsible for acidifying and maintaining the pH of intracellular compartments. Mediates oxidative stress response, filamentous growth, and plays an important role in virulence. The sequence is that of V-type proton ATPase catalytic subunit A from Candida albicans (strain SC5314 / ATCC MYA-2876) (Yeast).